The primary structure comprises 258 residues: Imidazole glycerol phosphate synthase subunit HisF (258 aa).

Catalysis depends on residues aspartate 11 and aspartate 130.

Belongs to the HisA/HisF family. Heterodimer of HisH and HisF.

Its subcellular location is the cytoplasm. The catalysed reaction is 5-[(5-phospho-1-deoxy-D-ribulos-1-ylimino)methylamino]-1-(5-phospho-beta-D-ribosyl)imidazole-4-carboxamide + L-glutamine = D-erythro-1-(imidazol-4-yl)glycerol 3-phosphate + 5-amino-1-(5-phospho-beta-D-ribosyl)imidazole-4-carboxamide + L-glutamate + H(+). It participates in amino-acid biosynthesis; L-histidine biosynthesis; L-histidine from 5-phospho-alpha-D-ribose 1-diphosphate: step 5/9. IGPS catalyzes the conversion of PRFAR and glutamine to IGP, AICAR and glutamate. The HisF subunit catalyzes the cyclization activity that produces IGP and AICAR from PRFAR using the ammonia provided by the HisH subunit. This Synechococcus sp. (strain CC9902) protein is Imidazole glycerol phosphate synthase subunit HisF.